A 360-amino-acid polypeptide reads, in one-letter code: Photosystem II protein D1 (360 aa).

3 helical membrane passes run 29–46 (YIGW…TATS), 118–133 (HFFI…EWEL), and 142–156 (WIAV…AATA). Histidine 118 lines the chlorophyll a pocket. Pheophytin a is bound at residue tyrosine 126. Residues aspartate 170 and glutamate 189 each contribute to the [CaMn4O5] cluster site. A helical membrane pass occupies residues 197–218 (FHMMGVAGVFGGSLFSAMHGSL). Histidine 198 is a binding site for chlorophyll a. Residues histidine 215 and 264 to 265 (SF) contribute to the a quinone site. A Fe cation-binding site is contributed by histidine 215. Residue histidine 272 coordinates Fe cation. The helical transmembrane segment at 274 to 288 (FLALWPVVCICVTAL) threads the bilayer. Residues histidine 332, glutamate 333, aspartate 342, and alanine 344 each coordinate [CaMn4O5] cluster. Positions 345–360 (SEVSLPVALNKVEING) are excised as a propeptide.

Belongs to the reaction center PufL/M/PsbA/D family. As to quaternary structure, PSII is composed of 1 copy each of membrane proteins PsbA, PsbB, PsbC, PsbD, PsbE, PsbF, PsbH, PsbI, PsbJ, PsbK, PsbL, PsbM, PsbT, PsbY, PsbZ, Psb30/Ycf12, at least 3 peripheral proteins of the oxygen-evolving complex and a large number of cofactors. It forms dimeric complexes. The cofactor is The D1/D2 heterodimer binds P680, chlorophylls that are the primary electron donor of PSII, and subsequent electron acceptors. It shares a non-heme iron and each subunit binds pheophytin, quinone, additional chlorophylls, carotenoids and lipids. D1 provides most of the ligands for the Mn4-Ca-O5 cluster of the oxygen-evolving complex (OEC). There is also a Cl(-1) ion associated with D1 and D2, which is required for oxygen evolution. The PSII complex binds additional chlorophylls, carotenoids and specific lipids.. Tyr-161 forms a radical intermediate that is referred to as redox-active TyrZ, YZ or Y-Z. Post-translationally, C-terminally processed by CTPA; processing is essential to allow assembly of the oxygen-evolving complex and thus photosynthetic growth.

Its subcellular location is the plastid. It localises to the chloroplast thylakoid membrane. The enzyme catalyses 2 a plastoquinone + 4 hnu + 2 H2O = 2 a plastoquinol + O2. Its function is as follows. Photosystem II (PSII) is a light-driven water:plastoquinone oxidoreductase that uses light energy to abstract electrons from H(2)O, generating O(2) and a proton gradient subsequently used for ATP formation. It consists of a core antenna complex that captures photons, and an electron transfer chain that converts photonic excitation into a charge separation. The D1/D2 (PsbA/PsbD) reaction center heterodimer binds P680, the primary electron donor of PSII as well as several subsequent electron acceptors. In Galdieria sulphuraria (Red alga), this protein is Photosystem II protein D1.